A 229-amino-acid chain; its full sequence is Small ribosomal subunit protein uS3 (229 aa).

One can recognise a KH type-2 domain in the interval 18–87 (IDEYLAKQYY…NPQITITNVE (70 aa)).

This sequence belongs to the universal ribosomal protein uS3 family. Part of the 30S ribosomal subunit.

Functionally, binds the lower part of the 30S subunit head. The polypeptide is Small ribosomal subunit protein uS3 (Saccharolobus solfataricus (strain ATCC 35092 / DSM 1617 / JCM 11322 / P2) (Sulfolobus solfataricus)).